Reading from the N-terminus, the 428-residue chain is Cytochrome P450-terp (428 aa).

C377 contributes to the heme binding site.

It belongs to the cytochrome P450 family. Requires heme as cofactor.

Its subcellular location is the cytoplasm. In terms of biological role, catalyzes the hydroxylation of alpha-terpineol. This is Cytochrome P450-terp (cyp108) from Pseudomonas sp.